Here is a 313-residue protein sequence, read N- to C-terminus: Dimethyladenosine transferase (313 aa).

The segment at 1-21 (MPKVKSGAIGRRRGRQEQRRE) is disordered. S-adenosyl-L-methionine is bound by residues His37, Leu39, Gly64, Glu85, Asp113, and Asn128.

Belongs to the class I-like SAM-binding methyltransferase superfamily. rRNA adenine N(6)-methyltransferase family. As to quaternary structure, part of the small subunit (SSU) processome, composed of more than 70 proteins and the RNA chaperone small nucleolar RNA (snoRNA) U3.

Its subcellular location is the nucleus. It is found in the nucleoplasm. The protein localises to the nucleolus. The enzyme catalyses adenosine(1779)/adenosine(1780) in 18S rRNA + 4 S-adenosyl-L-methionine = N(6)-dimethyladenosine(1779)/N(6)-dimethyladenosine(1780) in 18S rRNA + 4 S-adenosyl-L-homocysteine + 4 H(+). Specifically dimethylates two adjacent adenosines in the loop of a conserved hairpin near the 3'-end of 18S rRNA in the 40S particle. Involved in the pre-rRNA processing steps leading to small-subunit rRNA production independently of its RNA-modifying catalytic activity. Part of the small subunit (SSU) processome, first precursor of the small eukaryotic ribosomal subunit. During the assembly of the SSU processome in the nucleolus, many ribosome biogenesis factors, an RNA chaperone and ribosomal proteins associate with the nascent pre-rRNA and work in concert to generate RNA folding, modifications, rearrangements and cleavage as well as targeted degradation of pre-ribosomal RNA by the RNA exosome. The sequence is that of Dimethyladenosine transferase from Homo sapiens (Human).